We begin with the raw amino-acid sequence, 630 residues long: E3 ubiquitin-protein ligase RNF169 (630 aa).

The tract at residues 1–24 (MKMAAVGSAKSTGPGQRSKSRPGA) is disordered. The RING-type zinc finger occupies 36–75 (CPVCSEILLEPVTMPCGHSVCLHCFQRTVKLISLCCPLCR). Positions 155-163 (DERKKKMHI) match the UMI motif motif. A disordered region spans residues 220–247 (QRSRSCTDSEDGRGKSRGHTNQAVPEKA). The segment covering 224–233 (SCTDSEDGRG) has biased composition (basic and acidic residues). The MIU motif motif lies at 565-582 (QEKEDRELALKLQRQFDR). The LR motif motif lies at 599-611 (LRSWGSKDGIVGY).

Belongs to the RNF169 family.

The protein resides in the nucleus. It is found in the nucleoplasm. It catalyses the reaction S-ubiquitinyl-[E2 ubiquitin-conjugating enzyme]-L-cysteine + [acceptor protein]-L-lysine = [E2 ubiquitin-conjugating enzyme]-L-cysteine + N(6)-ubiquitinyl-[acceptor protein]-L-lysine.. It functions in the pathway protein modification; protein ubiquitination. Probable E3 ubiquitin-protein ligase that acts as a negative regulator of double-strand breaks (DSBs) repair following DNA damage. This Danio rerio (Zebrafish) protein is E3 ubiquitin-protein ligase RNF169 (rnf169).